The following is a 161-amino-acid chain: Beta-lactoglobulin-1 (161 aa).

2 disulfides stabilise this stretch: cysteine 66–cysteine 159 and cysteine 106–cysteine 119.

This sequence belongs to the calycin superfamily. Lipocalin family. In terms of assembly, monomer. In terms of tissue distribution, synthesized in mammary gland and secreted in milk.

It is found in the secreted. In terms of biological role, primary component of whey, it binds retinol and is probably involved in the transport of that molecule. In Canis lupus familiaris (Dog), this protein is Beta-lactoglobulin-1 (LGB1).